The following is a 466-amino-acid chain: Trigger factor (466 aa).

Positions 162–243 (GDVVSIDLSA…VRSVKERELP (82 aa)) constitute a PPIase FKBP-type domain. The disordered stretch occupies residues 428–466 (GNTIDTSEFFGKRVSAGEAEEAEPADEGAARAASDEATT). The span at 457-466 (ARAASDEATT) shows a compositional bias: low complexity.

The protein belongs to the FKBP-type PPIase family. Tig subfamily.

It localises to the cytoplasm. The enzyme catalyses [protein]-peptidylproline (omega=180) = [protein]-peptidylproline (omega=0). Functionally, involved in protein export. Acts as a chaperone by maintaining the newly synthesized protein in an open conformation. Functions as a peptidyl-prolyl cis-trans isomerase. This chain is Trigger factor, found in Mycobacterium bovis (strain BCG / Tokyo 172 / ATCC 35737 / TMC 1019).